Consider the following 715-residue polypeptide: Polyribonucleotide nucleotidyltransferase (715 aa).

The Mg(2+) site is built by Asp498 and Asp504. The 61-residue stretch at 565–625 folds into the KH domain; the sequence is PKVCMMQIKP…ETVKKTVAFI (61 aa). The S1 motif domain maps to 635 to 709; that stretch reads GTCYQASILR…RIDFLLLPKK (75 aa).

The protein belongs to the polyribonucleotide nucleotidyltransferase family. Mg(2+) serves as cofactor.

Its subcellular location is the cytoplasm. It carries out the reaction RNA(n+1) + phosphate = RNA(n) + a ribonucleoside 5'-diphosphate. Involved in mRNA degradation. Catalyzes the phosphorolysis of single-stranded polyribonucleotides processively in the 3'- to 5'-direction. The protein is Polyribonucleotide nucleotidyltransferase of Aster yellows witches'-broom phytoplasma (strain AYWB).